Reading from the N-terminus, the 241-residue chain is Carboxy-S-adenosyl-L-methionine synthase (241 aa).

S-adenosyl-L-methionine is bound by residues tyrosine 38, 63-65, 88-89, 116-117, asparagine 131, and arginine 198; these read GCS, DN, and DI.

It belongs to the class I-like SAM-binding methyltransferase superfamily. Cx-SAM synthase family. In terms of assembly, homodimer.

The enzyme catalyses prephenate + S-adenosyl-L-methionine = carboxy-S-adenosyl-L-methionine + 3-phenylpyruvate + H2O. In terms of biological role, catalyzes the conversion of S-adenosyl-L-methionine (SAM) to carboxy-S-adenosyl-L-methionine (Cx-SAM). The polypeptide is Carboxy-S-adenosyl-L-methionine synthase (Haemophilus influenzae (strain PittGG)).